We begin with the raw amino-acid sequence, 135 residues long: NADPH-dependent 7-cyano-7-deazaguanine reductase (135 aa).

The active-site Thioimide intermediate is cysteine 48. Aspartate 55 (proton donor) is an active-site residue. Residues 70-72 and 89-90 each bind substrate; these read IEL and HE.

The protein belongs to the GTP cyclohydrolase I family. QueF type 1 subfamily.

The protein localises to the cytoplasm. The enzyme catalyses 7-aminomethyl-7-carbaguanine + 2 NADP(+) = 7-cyano-7-deazaguanine + 2 NADPH + 3 H(+). Its pathway is tRNA modification; tRNA-queuosine biosynthesis. Functionally, catalyzes the NADPH-dependent reduction of 7-cyano-7-deazaguanine (preQ0) to 7-aminomethyl-7-deazaguanine (preQ1). In Prochlorococcus marinus (strain MIT 9303), this protein is NADPH-dependent 7-cyano-7-deazaguanine reductase.